Here is a 229-residue protein sequence, read N- to C-terminus: 2-C-methyl-D-erythritol 4-phosphate cytidylyltransferase (229 aa).

Belongs to the IspD/TarI cytidylyltransferase family. IspD subfamily.

It carries out the reaction 2-C-methyl-D-erythritol 4-phosphate + CTP + H(+) = 4-CDP-2-C-methyl-D-erythritol + diphosphate. It functions in the pathway isoprenoid biosynthesis; isopentenyl diphosphate biosynthesis via DXP pathway; isopentenyl diphosphate from 1-deoxy-D-xylulose 5-phosphate: step 2/6. Functionally, catalyzes the formation of 4-diphosphocytidyl-2-C-methyl-D-erythritol from CTP and 2-C-methyl-D-erythritol 4-phosphate (MEP). This is 2-C-methyl-D-erythritol 4-phosphate cytidylyltransferase from Clostridium botulinum (strain Okra / Type B1).